The chain runs to 410 residues: Sprouty-related, EVH1 domain-containing protein 2 (410 aa).

The 118-residue stretch at 5–122 folds into the WH1 domain; it reads THPDDDSYIV…RGVRKAIEDL (118 aa). The segment at 127 to 171 is disordered; sequence TTSSSTIHNEAELGDDDVFTTATDSSSNSSQKREPNTRTISSPTS. Polar residues predominate over residues 146–156; it reads TTATDSSSNSS. One can recognise a KBD domain in the interval 197 to 252; sequence SYPQVTFPEDDEEIVRINPREKIWMTGYEDYRHAPVRGKYLDSTEDADSYVRFAKG. Residues Tyr-224 and Tyr-227 each carry the phosphotyrosine modification. The tract at residues 274–294 is disordered; it reads DPKGNVIKTQPPRAKSRRRKE. An SPR domain is found at 300-408; that stretch reads RCVYCRDMFN…CRCCGGKHKA (109 aa).

Homodimer and heterodimer. Able to interact with SPRED1 to form heterodimers. Interacts with RAS. May interact with ZDHHC13 (via ANK repeats) and ZDHHC17 (via ANK repeats). Interacts with TESK1. Interacts with NF1. In terms of processing, phosphorylated on serine and threonine residues. Phosphorylated on tyrosine. Phosphorylation of Tyr-224 and Tyr-227 are required for ubiquitination. Ubiquitinated; leading to degradation by the proteasome. Expressed in the eye, with higher expression in lens epithelium than in lens fiber cells at postnatal day 15.

It is found in the cell membrane. The protein localises to the cytoplasmic vesicle. Its subcellular location is the secretory vesicle membrane. The protein resides in the cytoplasm. Its function is as follows. Negatively regulates Ras signaling pathways and downstream activation of MAP kinases. Recruits and translocates NF1 to the cell membrane, thereby enabling NF1-dependent hydrolysis of active GTP-bound Ras to inactive GDP-bound Ras. Inhibits fibroblast growth factor (FGF)-induced retinal lens fiber differentiation, probably by inhibiting FGF-mediated phosphorylation of ERK1/2. Inhibits TGFB-induced epithelial-to-mesenchymal transition in lens epithelial cells. The chain is Sprouty-related, EVH1 domain-containing protein 2 (Spred2) from Rattus norvegicus (Rat).